The following is a 347-amino-acid chain: uncharacterized protein (347 aa).

The N-terminal stretch at 1-21 is a signal peptide; that stretch reads MRYRIFLLFFFALLPTSLVWA.

This is an uncharacterized protein from Escherichia coli (strain K12).